The sequence spans 350 residues: Phenylalanine--tRNA ligase alpha subunit (350 aa).

E262 contacts Mg(2+).

Belongs to the class-II aminoacyl-tRNA synthetase family. Phe-tRNA synthetase alpha subunit type 1 subfamily. As to quaternary structure, tetramer of two alpha and two beta subunits. Mg(2+) serves as cofactor.

Its subcellular location is the cytoplasm. It carries out the reaction tRNA(Phe) + L-phenylalanine + ATP = L-phenylalanyl-tRNA(Phe) + AMP + diphosphate + H(+). The protein is Phenylalanine--tRNA ligase alpha subunit (pheS) of Thermus thermophilus (strain ATCC 27634 / DSM 579 / HB8).